The primary structure comprises 208 residues: Peptidyl-tRNA hydrolase (208 aa).

Tyr19 serves as a coordination point for tRNA. Residue His24 is the Proton acceptor of the active site. Phe71, Asn73, and Asn119 together coordinate tRNA.

It belongs to the PTH family. Monomer.

It localises to the cytoplasm. The catalysed reaction is an N-acyl-L-alpha-aminoacyl-tRNA + H2O = an N-acyl-L-amino acid + a tRNA + H(+). Hydrolyzes ribosome-free peptidyl-tRNAs (with 1 or more amino acids incorporated), which drop off the ribosome during protein synthesis, or as a result of ribosome stalling. Its function is as follows. Catalyzes the release of premature peptidyl moieties from peptidyl-tRNA molecules trapped in stalled 50S ribosomal subunits, and thus maintains levels of free tRNAs and 50S ribosomes. The chain is Peptidyl-tRNA hydrolase from Synechococcus elongatus (strain ATCC 33912 / PCC 7942 / FACHB-805) (Anacystis nidulans R2).